The chain runs to 260 residues: Cytochrome c1-2, heme protein, mitochondrial (260 aa).

Residues 1 to 17 (IGAGVSGLLGFATVASA) constitute a mitochondrion transit peptide. At 18-221 (DEAEHGLECP…AAEPEMEERK (204 aa)) the chain is on the mitochondrial intermembrane side. The region spanning 43–150 (ASIRRGHQVY…NGQNYVFALL (108 aa)) is the Cytochrome c domain. Heme c contacts are provided by Cys-56, Cys-59, His-60, and Met-179. The chain crosses the membrane as a helical span at residues 222–241 (LMGFKWIFVLSLALLQAAYY). Residues 242–260 (RRLRWSVLKSRKLVLDVVN) are Mitochondrial matrix-facing.

This sequence belongs to the cytochrome c family. In terms of assembly, component of the ubiquinol-cytochrome c oxidoreductase (cytochrome b-c1 complex, complex III, CIII), a multisubunit enzyme composed of 3 respiratory subunits cytochrome b, cytochrome c1 and Rieske protein, 2 core protein subunits, and additional low-molecular weight protein subunits. The complex exists as an obligatory dimer and forms supercomplexes (SCs) in the inner mitochondrial membrane with cytochrome c oxidase (complex IV, CIV). Heme c is required as a cofactor. In terms of tissue distribution, in all tissues analyzed.

The protein localises to the mitochondrion inner membrane. It catalyses the reaction a quinol + 2 Fe(III)-[cytochrome c](out) = a quinone + 2 Fe(II)-[cytochrome c](out) + 2 H(+)(out). Functionally, component of the ubiquinol-cytochrome c oxidoreductase, a multisubunit transmembrane complex that is part of the mitochondrial electron transport chain which drives oxidative phosphorylation. The respiratory chain contains 3 multisubunit complexes succinate dehydrogenase (complex II, CII), ubiquinol-cytochrome c oxidoreductase (cytochrome b-c1 complex, complex III, CIII) and cytochrome c oxidase (complex IV, CIV), that cooperate to transfer electrons derived from NADH and succinate to molecular oxygen, creating an electrochemical gradient over the inner membrane that drives transmembrane transport and the ATP synthase. The cytochrome b-c1 complex catalyzes electron transfer from ubiquinol to cytochrome c, linking this redox reaction to translocation of protons across the mitochondrial inner membrane, with protons being carried across the membrane as hydrogens on the quinol. In the process called Q cycle, 2 protons are consumed from the matrix, 4 protons are released into the intermembrane space and 2 electrons are passed to cytochrome c. Cytochrome c1 is a catalytic core subunit containing a c-type heme. It transfers electrons from the [2Fe-2S] iron-sulfur cluster of the Rieske protein to cytochrome c. This chain is Cytochrome c1-2, heme protein, mitochondrial (CYCL), found in Solanum tuberosum (Potato).